We begin with the raw amino-acid sequence, 420 residues long: UDP-N-acetylglucosamine 1-carboxyvinyltransferase 2 (420 aa).

22–23 (KN) provides a ligand contact to phosphoenolpyruvate. Residue R92 coordinates UDP-N-acetyl-alpha-D-glucosamine. Residue C116 is the Proton donor of the active site. 2-(S-cysteinyl)pyruvic acid O-phosphothioketal is present on C116. UDP-N-acetyl-alpha-D-glucosamine contacts are provided by residues 121–125 (RPIDL), D307, and I329.

It belongs to the EPSP synthase family. MurA subfamily.

Its subcellular location is the cytoplasm. The enzyme catalyses phosphoenolpyruvate + UDP-N-acetyl-alpha-D-glucosamine = UDP-N-acetyl-3-O-(1-carboxyvinyl)-alpha-D-glucosamine + phosphate. It functions in the pathway cell wall biogenesis; peptidoglycan biosynthesis. Functionally, cell wall formation. Adds enolpyruvyl to UDP-N-acetylglucosamine. This is UDP-N-acetylglucosamine 1-carboxyvinyltransferase 2 from Streptococcus thermophilus (strain CNRZ 1066).